The following is a 185-amino-acid chain: Peptidyl-tRNA hydrolase (185 aa).

Position 14 (Y14) interacts with tRNA. H19 acts as the Proton acceptor in catalysis. Positions 64, 66, and 112 each coordinate tRNA.

Belongs to the PTH family. In terms of assembly, monomer.

It is found in the cytoplasm. It catalyses the reaction an N-acyl-L-alpha-aminoacyl-tRNA + H2O = an N-acyl-L-amino acid + a tRNA + H(+). Functionally, hydrolyzes ribosome-free peptidyl-tRNAs (with 1 or more amino acids incorporated), which drop off the ribosome during protein synthesis, or as a result of ribosome stalling. In terms of biological role, catalyzes the release of premature peptidyl moieties from peptidyl-tRNA molecules trapped in stalled 50S ribosomal subunits, and thus maintains levels of free tRNAs and 50S ribosomes. The sequence is that of Peptidyl-tRNA hydrolase from Lactobacillus gasseri (strain ATCC 33323 / DSM 20243 / BCRC 14619 / CIP 102991 / JCM 1131 / KCTC 3163 / NCIMB 11718 / NCTC 13722 / AM63).